A 500-amino-acid polypeptide reads, in one-letter code: Probable cytochrome P450 514A2 (500 aa).

Residues 4–24 (IYTIILTIIILVLIISIKDLF) traverse the membrane as a helical segment. Cys-446 provides a ligand contact to heme.

It belongs to the cytochrome P450 family. It depends on heme as a cofactor.

It localises to the membrane. This chain is Probable cytochrome P450 514A2 (cyp514A2), found in Dictyostelium discoideum (Social amoeba).